We begin with the raw amino-acid sequence, 203 residues long: CASP-like protein 2U5 (203 aa).

The Cytoplasmic portion of the chain corresponds to 1–31 (MSEHRIPVAADKQISPPISAGEQKGCKGLKR). A helical transmembrane segment spans residues 32-52 (TDLMLRFAAFVCCAVTMVVLI). Topologically, residues 53 to 84 (TDKQTSAIQVPGFNNLTITKTVSFDLAKAFVY) are extracellular. An N-linked (GlcNAc...) asparagine glycan is attached at Asn-67. The chain crosses the membrane as a helical span at residues 85 to 105 (LVSAAGIGAGYTLLVLVLSII). Topologically, residues 106 to 111 (SAERSK) are cytoplasmic. A helical membrane pass occupies residues 112–132 (AIAWFIFVFDQLITYVLLAAA). At 133-164 (AASTEVAYMGAHAPPEASWLKVCSLFGRFCHQ) the chain is on the extracellular side. The helical transmembrane segment at 165–185 (LGASLVTSFISTVLFAFSAAI) threads the bilayer. The Cytoplasmic portion of the chain corresponds to 186 to 203 (SAYYLFSNTNVRPAYSKG).

It belongs to the Casparian strip membrane proteins (CASP) family. As to quaternary structure, homodimer and heterodimers.

The protein localises to the cell membrane. In Selaginella moellendorffii (Spikemoss), this protein is CASP-like protein 2U5.